A 319-amino-acid polypeptide reads, in one-letter code: CCAAT/enhancer-binding protein homolog 1 (319 aa).

Residues 53-67 (SLTIAASLQQRDRER) are n' domain; required for axon regeneration. Positions 163 to 319 (TRRAVKRPVP…QRHILENFNK (157 aa)) are disordered. The segment covering 171–181 (VPYDDYQKEYS) has biased composition (basic and acidic residues). Over residues 182–198 (EESSDMTDNDGSVDDSY) the composition is skewed to acidic residues. Basic and acidic residues-rich tracts occupy residues 225-248 (LKADEEKAEPTYKLKRARNNDAVR), 255-274 (KELQDKKEAEHDKMKRRIAE), 281-291 (SERDARRRDQD), and 302-319 (PMKEQRMPQRHILENFNK). The bZIP domain maps to 233–308 (EPTYKLKRAR…NKGPMKEQRM (76 aa)). The basic motif stretch occupies residues 237-271 (KLKRARNNDAVRKSRKKAKELQDKKEAEHDKMKRR). The tract at residues 275-308 (LEGLLQSERDARRRDQDTLEQLLRNKGPMKEQRM) is leucine-zipper.

This sequence belongs to the bZIP family. C/EBP subfamily. May interact with transcription factor ets-4. May interact (via N-terminus) with nipi-3. May interact (via N-terminus) with importin subunit alpha ima-3. As to expression, expressed in touch and motor neurons.

Its subcellular location is the synapse. The protein localises to the cytoplasm. It localises to the nucleus. The protein resides in the cell projection. It is found in the axon. Its function is as follows. Transcription factor. Binds to promoter regions of target genes, perhaps at the motif 5'-[AGCT]TT[AGT][TC]GAAA[ACT]-3'. Modulates expression of genes involved in development and in stress responses, including those regulating the p38/MAPK signaling pathways such as MAPKK sek-1 and phosphatase vhp-1. Involved in innate immunity. Plays a role in repressing the response to infection by the Gram-negative bacterium P.aeruginosa, perhaps acting independently of the pmk-1 or pmk-3 p38/MAPK pathways. However, also plays a protective role in the response to infection by P.aeruginosa. Required in axonal regrowth following injury and synaptogenesis. Following axon injury, in concert with transcription factor ets-4, activates expression of receptor tyrosine kinase svh-2. May function downstream of the Ca2+-activated p38/MAPK pathway to promote axon regeneration. Plays a role in modulating polymerization of neuronal microtubules. Involved in modulating lipid homeostasis. The sequence is that of CCAAT/enhancer-binding protein homolog 1 from Caenorhabditis elegans.